A 222-amino-acid chain; its full sequence is MDPSEYFAGGNPSDQQNQKRQLQICGPRPSPLSVHKDSHKIKKPPKHPAPPPNRDQPPPYIPREPVVIYAVSPKVVHATASEFMNVVQRLTGISSGVFLESGGGGDVSPAARLASTENASPRGGKEPAARDETVEINTAMEEAAEFGGYAPGILSPSPALLPTASTGIFSPMYHQGGMFSPAIPLGLFSPAGFMSPFRSPGFTSLVASPTFADFFSHIWDQD.

A disordered region spans residues 1–61; sequence MDPSEYFAGG…PNRDQPPPYI (61 aa). Residues 12 to 21 are compositionally biased toward polar residues; it reads PSDQQNQKRQ. The residue at position 30 (Ser-30) is a Phosphoserine. Positions 37–46 are enriched in basic residues; sequence DSHKIKKPPK. Over residues 47 to 61 the composition is skewed to pro residues; the sequence is HPAPPPNRDQPPPYI. Phosphoserine is present on Ser-72. The VQ motif lies at 83–92; it reads FMNVVQRLTG. A disordered region spans residues 105 to 130; it reads GDVSPAARLASTENASPRGGKEPAAR. Residues Ser-108 and Ser-120 each carry the phosphoserine modification.

In terms of assembly, interacts with MPK4, WRKY25 and WRKY33. Post-translationally, phosphorylated on serine residue by MPK4.

It is found in the nucleus. In terms of biological role, regulator of plant defense response. May contribute to MPK4-regulated defense activation by coupling the kinase to specific WRKY transcription factors. The chain is Protein MKS1 (MKS1) from Arabidopsis thaliana (Mouse-ear cress).